The chain runs to 1101 residues: ATP-citrate synthase (1101 aa).

In terms of domain architecture, ATP-grasp spans 4–265 (KAISEQTGKE…LDAKSGASLK (262 aa)). ATP is bound by residues lysine 58, arginine 66, glycine 67, proline 109, valine 111, and glutamate 118. Tyrosine 131 is modified (phosphotyrosine). Aspartate 216 contributes to the ATP binding site. Residues aspartate 257, serine 260, and alanine 262 each coordinate Mg(2+). The residue at position 263 (serine 263) is a Phosphoserine. Citrate contacts are provided by glycine 309, asparagine 346, threonine 348, tyrosine 364, and arginine 379. Residues 441–457 (ASGSTSTPAPSRTASFS) show a composition bias toward low complexity. The segment at 441–487 (ASGSTSTPAPSRTASFSESRADEVAPAKKAKPAMPQDSVPSPRSLQG) is disordered. The residue at position 447 (threonine 447) is a Phosphothreonine. Phosphoserine is present on serine 451. Serine 455 bears the Phosphoserine; by PKA and PKB/AKT1 or PKB/AKT2 or BCKDK mark. Residues serine 459 and serine 481 each carry the phosphoserine modification. Over residues 478–487 (SVPSPRSLQG) the composition is skewed to polar residues. Residues lysine 540, lysine 546, and lysine 554 each carry the N6-acetyllysine; alternate modification. Glycyl lysine isopeptide (Lys-Gly) (interchain with G-Cter in ubiquitin); alternate cross-links involve residues lysine 540, lysine 546, and lysine 554. Phosphothreonine is present on threonine 639. Serine 663 carries the phosphoserine modification. A Phosphotyrosine modification is found at tyrosine 682. The active-site Tele-phosphohistidine intermediate is histidine 760. CoA is bound at residue 779–789 (LKEAGVFVPRS). Serine 839 is subject to Phosphoserine. Residues lysine 948, lysine 968, lysine 978, and lysine 1077 each carry the N6-acetyllysine modification. Serine 1100 carries the phosphoserine modification.

The protein in the N-terminal section; belongs to the succinate/malate CoA ligase beta subunit family. In the C-terminal section; belongs to the succinate/malate CoA ligase alpha subunit family. As to quaternary structure, homotetramer. Mg(2+) is required as a cofactor. In terms of processing, phosphorylated by PKA and GSK3 in a sequential manner; phosphorylation results in activation of its activity. Phosphorylation on Thr-447 and Ser-451 depends on the phosphorylation state of Ser-455. Phosphorylation on Ser-455 is decreased by prior phosphorylation on the other 2 residues. Phosphorylated at Ser-455 by BCKDK and dephosphorylated by protein phosphatase PPM1K. ISGylated. Post-translationally, acetylated at Lys-540, Lys-546 and Lys-554 by KAT2B/PCAF. Acetylation is promoted by glucose and stabilizes the protein, probably by preventing ubiquitination at the same sites. Acetylation promotes de novo lipid synthesis. Deacetylated by SIRT2. In terms of processing, ubiquitinated at Lys-540, Lys-546 and Lys-554 by the BCR(KLHL25) E3 ubiquitin ligase complex and UBR4, leading to its degradation. Ubiquitination is probably inhibited by acetylation at same site. BCR(KLHL25)-mediated degradation of ACLY promotes fatty acid oxidation and is required for differentiation of inducible regulatory T (iTreg) cells.

It is found in the cytoplasm. It localises to the cytosol. It carries out the reaction oxaloacetate + acetyl-CoA + ADP + phosphate = citrate + ATP + CoA. Its activity is regulated as follows. Phosphorylation results in activation of its activity. Glucose 6-phosphate, fructose 6-phosphate, fructose 2,6-bisphosphate, ribulose 5-phosphate, and fructose 1,6-bisphosphate also act as activators. Catalyzes the cleavage of citrate into oxaloacetate and acetyl-CoA, the latter serving as common substrate in multiple biochemical reactions in protein, carbohydrate and lipid metabolism. The protein is ATP-citrate synthase (ACLY) of Homo sapiens (Human).